The sequence spans 350 residues: Protein Wnt-2 (350 aa).

A signal peptide spans 1–25 (MNFLPNGICFYLSVAICWFSSRVDA). Cystine bridges form between Cys-74–Cys-85, Cys-125–Cys-133, Cys-135–Cys-155, Cys-204–Cys-218, Cys-206–Cys-213, Cys-276–Cys-307, Cys-292–Cys-302, Cys-306–Cys-346, Cys-322–Cys-337, Cys-324–Cys-334, and Cys-329–Cys-330. An N-linked (GlcNAc...) asparagine glycan is attached at Asn-132. Ser-210 carries the O-palmitoleoyl serine; by PORCN lipid modification. The N-linked (GlcNAc...) asparagine glycan is linked to Asn-293.

This sequence belongs to the Wnt family. Post-translationally, palmitoleoylation is required for efficient binding to frizzled receptors. Depalmitoleoylation leads to Wnt signaling pathway inhibition.

Its subcellular location is the secreted. The protein resides in the extracellular space. It is found in the extracellular matrix. Functionally, ligand for members of the frizzled family of seven transmembrane receptors. Functions in the canonical Wnt signaling pathway that results in activation of transcription factors of the TCF/LEF family. This Danio rerio (Zebrafish) protein is Protein Wnt-2 (wnt2).